Here is a 342-residue protein sequence, read N- to C-terminus: Heat-inducible transcription repressor HrcA (342 aa).

This sequence belongs to the HrcA family.

Functionally, negative regulator of class I heat shock genes (grpE-dnaK-dnaJ and groELS operons). Prevents heat-shock induction of these operons. The polypeptide is Heat-inducible transcription repressor HrcA (Leptospira interrogans serogroup Icterohaemorrhagiae serovar copenhageni (strain Fiocruz L1-130)).